The chain runs to 460 residues: Interleukin-6 receptor subunit alpha (460 aa).

A signal peptide spans 1 to 19 (MLTVGCTLLVALLAAPAVA). Positions 20–116 (LVLGSCRALE…DVPPEEPKLS (97 aa)) constitute an Ig-like C2-type domain. Residues 20 to 364 (LVLGSCRALE…VQESSSMSLP (345 aa)) are Extracellular-facing. 4 cysteine pairs are disulfide-bonded: Cys25–Cys190, Cys47–Cys92, Cys117–Cys128, and Cys162–Cys173. 2 N-linked (GlcNAc...) asparagine glycosylation sites follow: Asn32 and Asn55. 2 Fibronectin type-III domains span residues 109–214 (PPEE…VQPD) and 215–313 (PPAN…TPWI). Asn150 is a glycosylation site (N-linked (GlcNAc...) asparagine). A glycan (N-linked (GlcNAc...) asparagine) is linked at Asn218. A WSXWS motif motif is present at residues 300–304 (WSEWS). A helical membrane pass occupies residues 365–385 (TFLVAGGSLAFGLLLCVFIIL). The Cytoplasmic portion of the chain corresponds to 386–460 (RLKQKWKSEA…NSNRDYLFPR (75 aa)).

It belongs to the type I cytokine receptor family. Type 3 subfamily. As to quaternary structure, component of a hexamer of two molecules each of IL6, IL6R and IL6ST; first binds to IL6 to associate with the signaling subunit IL6ST. Interacts (via N-terminal ectodomain) with SORL1; this interaction may affect IL6-binding to IL6R, hence decrease IL6 'classic-signaling'. In terms of assembly, also interacts with SORL1; this interaction leads to soluble IL6R internalization. May form a trimeric complex with the soluble SORL1 ectodomain and circulating IL6 receptor; this interaction might stabilize circulating IL6, hence promote IL6 'trans-signaling'. A short soluble form is also released from the membrane by proteolysis. The sIL6R is formed by limited proteolysis of membrane-bound receptors, a process referred to as ectodomain shedding. mIL6R is cleaved by the proteases ADAM10 and ADAM17. Post-translationally, glycosylated. Glycosylation is dispensable for transport, signaling, and cell-surface turnover. Glycosylation at Asn-55 is a protease-regulatory exosite. Glycosylation is required for ADAM17-mediated proteolysis. In terms of tissue distribution, expressed by dendritic cells. As to expression, detected in the cerebrospinal fluid.

It is found in the cell membrane. The protein localises to the secreted. Its activity is regulated as follows. Classic and trans-signaling are both inhibited by tocilizumab, a humanized monoclonal antibody that blocks interleukin IL6R signaling. Part of the receptor for interleukin 6. Binds to IL6 with low affinity, but does not transduce a signal. Signal activation necessitate an association with IL6ST. Activation leads to the regulation of the immune response, acute-phase reactions and hematopoiesis. The interaction with membrane-bound IL6R and IL6ST stimulates 'classic signaling', the restricted expression of the IL6R limits classic IL6 signaling to only a few tissues such as the liver and some cells of the immune system. Whereas the binding of IL6 and soluble IL6R to IL6ST stimulates 'trans-signaling'. Alternatively, 'cluster signaling' occurs when membrane-bound IL6:IL6R complexes on transmitter cells activate IL6ST receptors on neighboring receiver cells. Its function is as follows. Signaling via the membrane-bound IL6R is mostly regenerative and anti-inflammatory. Drives naive CD4(+) T cells to the Th17 lineage, through 'cluster signaling' by dendritic cells. In terms of biological role, soluble form of IL6 receptor (sIL6R) that acts as an agonist of IL6 activity. The IL6:sIL6R complex (hyper-IL6) binds to IL6ST/gp130 on cell surfaces and induces signaling also on cells that do not express membrane-bound IL6R in a process called IL6 'trans-signaling'. sIL6R is causative for the pro-inflammatory properties of IL6 and an important player in the development of chronic inflammatory diseases. In complex with IL6, is required for induction of VEGF production. Plays a protective role during liver injury, being required for maintenance of tissue regeneration. 'Trans-signaling' in central nervous system regulates energy and glucose homeostasis. This Mus musculus (Mouse) protein is Interleukin-6 receptor subunit alpha.